Here is a 355-residue protein sequence, read N- to C-terminus: Methionine import ATP-binding protein MetN (355 aa).

The ABC transporter domain occupies 8–250 (LKNIDITFTQ…PQEDLTQEFI (243 aa)). Residue 42 to 49 (GYSGAGKS) coordinates ATP.

The protein belongs to the ABC transporter superfamily. Methionine importer (TC 3.A.1.24) family. The complex is composed of two ATP-binding proteins (MetN), two transmembrane proteins (MetI) and a solute-binding protein (MetQ).

It is found in the cell membrane. It carries out the reaction L-methionine(out) + ATP + H2O = L-methionine(in) + ADP + phosphate + H(+). The catalysed reaction is D-methionine(out) + ATP + H2O = D-methionine(in) + ADP + phosphate + H(+). Functionally, part of the ABC transporter complex MetNIQ involved in methionine import. Responsible for energy coupling to the transport system. This Streptococcus thermophilus (strain CNRZ 1066) protein is Methionine import ATP-binding protein MetN.